Here is a 316-residue protein sequence, read N- to C-terminus: MIKIFELKSIISIKDFERKDIDYILDEASKLEDIAKSKECCDELKGKILGLMFFEPSTRTRLSFETSMKRLGGNCIGIENTRSCSVSKGESIADTAKMFEGYSDALVIRHELEGVSKFISDIVDVPVINAGDGAGQHPTQTLLDLYTIKKELGQIDNLKIALVGDLKFGRTVHSLSNALGLYDNVELYFVAPKELRMPQEVLHDLNKKNIPYTEVDSIEEIIDKVDVLYVTRIQKERFGDLDEYLKIKGAYIVNKKMLEGKDVIVMHPLPRIDEIATDLDNTKHNKYFNQAFNAVPVRMAILKTLIKNNPKWNHIE.

Residues Arg-59 and Thr-60 each coordinate carbamoyl phosphate. Lys-88 provides a ligand contact to L-aspartate. Positions 109, 137, and 140 each coordinate carbamoyl phosphate. Arg-170 and Arg-232 together coordinate L-aspartate. 2 residues coordinate carbamoyl phosphate: Leu-269 and Pro-270.

It belongs to the aspartate/ornithine carbamoyltransferase superfamily. ATCase family. Heterooligomer of catalytic and regulatory chains.

The enzyme catalyses carbamoyl phosphate + L-aspartate = N-carbamoyl-L-aspartate + phosphate + H(+). The protein operates within pyrimidine metabolism; UMP biosynthesis via de novo pathway; (S)-dihydroorotate from bicarbonate: step 2/3. Catalyzes the condensation of carbamoyl phosphate and aspartate to form carbamoyl aspartate and inorganic phosphate, the committed step in the de novo pyrimidine nucleotide biosynthesis pathway. The polypeptide is Aspartate carbamoyltransferase catalytic subunit (Methanobrevibacter smithii (strain ATCC 35061 / DSM 861 / OCM 144 / PS)).